Consider the following 344-residue polypeptide: Cyclin-dependent kinase 7 (344 aa).

Residues 12–294 form the Protein kinase domain; sequence YEKLDFLGEG…ASQALKMRYF (283 aa). ATP is bound by residues 18 to 26 and Lys41; that span reads LGEGQFATV. Asp136 serves as the catalytic Proton acceptor. Phosphoserine; by CDK1 and CDK2 is present on Ser163. Phosphothreonine; by CDK2 is present on Thr169.

This sequence belongs to the protein kinase superfamily. CMGC Ser/Thr protein kinase family. CDC2/CDKX subfamily. Probably associates with cyclin-H (ccnh) and mat1 to form a multimeric active enzyme. Post-translationally, phosphorylation of Ser-163 during mitosis inactivates the enzyme. Phosphorylation of Thr-169 is required for activity. Phosphorylated at Ser-163 and Thr-169 by CDK2.

Its subcellular location is the nucleus. The catalysed reaction is L-seryl-[protein] + ATP = O-phospho-L-seryl-[protein] + ADP + H(+). It catalyses the reaction L-threonyl-[protein] + ATP = O-phospho-L-threonyl-[protein] + ADP + H(+). It carries out the reaction [DNA-directed RNA polymerase] + ATP = phospho-[DNA-directed RNA polymerase] + ADP + H(+). Phosphorylation at Thr-169 is required for enzymatic activity. Its function is as follows. Serine/threonine kinase involved in cell cycle control and in RNA polymerase II-mediated RNA transcription. Cyclin-dependent kinases (CDKs) are activated by the binding to a cyclin and mediate the progression through the cell cycle. Each different complex controls a specific transition between 2 subsequent phases in the cell cycle. Required for both activation and complex formation of cdk1/cyclin-B during G2-M transition, and for activation of cdk2/cyclins during G1-S transition (but not complex formation). cdk7 is the catalytic subunit of the CDK-activating kinase (CAK) complex. CAK activates the cyclin-associated kinases cdk1, cdk2, cdk4 and cdk6 by threonine phosphorylation, thus regulating cell cycle progression. Initiates transcription by RNA polymerase II by mediating phosphorylation of polr2a at 'Ser-5' of the repetitive C-terminal domain (CTD) when polr2a is in complex with DNA, promoting dissociation from DNA and initiation. CAK complexed to the core-TFIIH basal transcription factor activates RNA polymerase II by serine phosphorylation of the CTD of polr2a, allowing its escape from the promoter and elongation of the transcripts. In Carassius auratus (Goldfish), this protein is Cyclin-dependent kinase 7 (cdk7).